We begin with the raw amino-acid sequence, 149 residues long: MSKVVSKMKSFLGFDEFEDEDEVMEEEEVMEEEESFAPVLSSKKNGKVVNIHTANTAKLMITKPLVYDDATEICTALKNRKIVVINTTSLELRTAQRLIDFVGGACYALCGELQEVEKGVFIVSPSNVEVSNELKSELSNKGMFNWASK.

This sequence belongs to the SepF family. In terms of assembly, homodimer. Interacts with FtsZ.

It localises to the cytoplasm. Cell division protein that is part of the divisome complex and is recruited early to the Z-ring. Probably stimulates Z-ring formation, perhaps through the cross-linking of FtsZ protofilaments. Its function overlaps with FtsA. This chain is Cell division protein SepF, found in Clostridium perfringens (strain ATCC 13124 / DSM 756 / JCM 1290 / NCIMB 6125 / NCTC 8237 / Type A).